The sequence spans 546 residues: CTP synthase (546 aa).

Residues 1–269 are amidoligase domain; sequence MNPNTKIIFV…DAKLVELLNL (269 aa). S16 contributes to the CTP binding site. S16 is a binding site for UTP. ATP-binding positions include 17–22 and D74; that span reads SLGKGV. Mg(2+) contacts are provided by D74 and E143. Residues 150 to 152, 190 to 195, and K226 each bind CTP; these read DIE and KTKPTQ. UTP is bound by residues 190–195 and K226; that span reads KTKPTQ. The region spanning 294–546 is the Glutamine amidotransferase type-1 domain; the sequence is TIAMVGKYVS…IHAAVEKSNK (253 aa). An L-glutamine-binding site is contributed by G356. C383 (nucleophile; for glutamine hydrolysis) is an active-site residue. L-glutamine is bound by residues 384-387, E407, and R474; that span reads LGMQ. Catalysis depends on residues H519 and E521.

This sequence belongs to the CTP synthase family. In terms of assembly, homotetramer.

It carries out the reaction UTP + L-glutamine + ATP + H2O = CTP + L-glutamate + ADP + phosphate + 2 H(+). The enzyme catalyses L-glutamine + H2O = L-glutamate + NH4(+). It catalyses the reaction UTP + NH4(+) + ATP = CTP + ADP + phosphate + 2 H(+). Its pathway is pyrimidine metabolism; CTP biosynthesis via de novo pathway; CTP from UDP: step 2/2. Its activity is regulated as follows. Allosterically activated by GTP, when glutamine is the substrate; GTP has no effect on the reaction when ammonia is the substrate. The allosteric effector GTP functions by stabilizing the protein conformation that binds the tetrahedral intermediate(s) formed during glutamine hydrolysis. Inhibited by the product CTP, via allosteric rather than competitive inhibition. Catalyzes the ATP-dependent amination of UTP to CTP with either L-glutamine or ammonia as the source of nitrogen. Regulates intracellular CTP levels through interactions with the four ribonucleotide triphosphates. The polypeptide is CTP synthase (Francisella philomiragia subsp. philomiragia (strain ATCC 25017 / CCUG 19701 / FSC 153 / O#319-036)).